The chain runs to 552 residues: Protein TRM32 (552 aa).

Residues 295–379 (TDLPRDSSTS…NKTAEKTETL (85 aa)) are disordered. Positions 331–351 (VRAEKEEKYEVQEERSQENHL) are enriched in basic and acidic residues. Residues 352–371 (DSSNQRILQQEPDSVPSTNK) are compositionally biased toward polar residues.

The protein is Protein TRM32 (TRM32) of Arabidopsis thaliana (Mouse-ear cress).